We begin with the raw amino-acid sequence, 656 residues long: Translation factor GUF1 homolog, mitochondrial (656 aa).

The transit peptide at 1–29 (MLAVRRRGLRVLAVAPLRVRGLATTSTEF) directs the protein to the mitochondrion. A tr-type G domain is found at 54–238 (ERIRNFSIVA…AVVERLPPPV (185 aa)). GTP contacts are provided by residues 63-70 (AHIDHGKS), 131-135 (DTPGH), and 185-188 (TKID).

It belongs to the TRAFAC class translation factor GTPase superfamily. Classic translation factor GTPase family. LepA subfamily.

The protein localises to the mitochondrion inner membrane. The catalysed reaction is GTP + H2O = GDP + phosphate + H(+). Functionally, promotes mitochondrial protein synthesis. May act as a fidelity factor of the translation reaction, by catalyzing a one-codon backward translocation of tRNAs on improperly translocated ribosomes. Binds to mitochondrial ribosomes in a GTP-dependent manner. The chain is Translation factor GUF1 homolog, mitochondrial from Phytophthora infestans (strain T30-4) (Potato late blight agent).